Reading from the N-terminus, the 545-residue chain is Cleavage and polyadenylation specificity factor subunit 6 (545 aa).

Positions 37–69 (ISPSANNGDAPEDRDYLDSLPAPGGNEGSKGAP) are disordered. The region spanning 81–161 (IALYIGNLTW…QNPIVTPCNK (81 aa)) is the RRM domain. The segment covering 165–180 (SQFEMQSRKSTQSGQM) has biased composition (polar residues). 2 disordered regions span residues 165–404 (SQFE…PLSE) and 478–545 (YGSV…YRHR). Positions 184 to 200 (GKAGPPGSGSRGGGFPP) are enriched in gly residues. Composition is skewed to pro residues over residues 220-230 (PVGPGGPPPHF), 237-265 (PRLPSGPPGPLGPPGPPPPGQGLPPPLGG), 287-363 (PMGP…PPGN), and 372-383 (GPPPGDPYGRPP). Basic and acidic residues-rich tracts occupy residues 384-397 (PYDRDFPGGRDMDA) and 483-497 (GRRERSRERDHSRSR). Residues 498-508 (EKSRRHKSRSR) are compositionally biased toward basic residues. Residues 509 to 545 (DRHEDYYRERSRERDRHRERDRDRERDREREREYRHR) show a composition bias toward basic and acidic residues.

The protein belongs to the RRM CPSF6/7 family. Component of the cleavage factor Im (CFIm) complex.

The protein resides in the nucleus. The protein localises to the nucleoplasm. It localises to the nucleus speckle. It is found in the cytoplasm. In terms of biological role, component of the cleavage factor Im (CFIm) complex that functions as an activator of the pre-mRNA 3'-end cleavage and polyadenylation processing required for the maturation of pre-mRNA into functional mRNAs. CFIm contributes to the recruitment of multiprotein complexes on specific sequences on the pre-mRNA 3'-end, so called cleavage and polyadenylation signals (pA signals). Most pre-mRNAs contain multiple pA signals, resulting in alternative cleavage and polyadenylation (APA) producing mRNAs with variable 3'-end formation. The CFIm complex acts as a key regulator of cleavage and polyadenylation site choice during APA through its binding to 5'-UGUA-3' elements localized in the 3'-untranslated region (UTR) for a huge number of pre-mRNAs. Plays a role in mRNA export. In Danio rerio (Zebrafish), this protein is Cleavage and polyadenylation specificity factor subunit 6.